The chain runs to 656 residues: Choline transporter-like protein 1 (656 aa).

Gly-2 carries the N-myristoyl glycine lipid modification. The Cytoplasmic segment spans residues 2–29 (GCCSSASAAQSSKREWKPLEDRSCTDIP). A helical membrane pass occupies residues 30–50 (WLLLFVLFCIGMGFICGFSVA). Residues 51-211 (TGAAARLVSG…RLISGVMTSK (161 aa)) lie on the Extracellular side of the membrane. N-linked (GlcNAc...) asparagine glycans are attached at residues Asn-134 and Asn-179. The helical transmembrane segment at 212–232 (EIILGLCLLSLVLSMILMVII) threads the bilayer. At 233–237 (RYISR) the chain is on the cytoplasmic side. Residues 238 to 258 (VLVWILTILVILGSLGGTGVL) traverse the membrane as a helical segment. Over 259–287 (WWLYAKQRRSPKETVIPEQLQIAEDNLRA) the chain is Extracellular. The chain crosses the membrane as a helical span at residues 288–308 (LLIYAISATVFTVILFLIMLV). At 309–314 (MRKRVA) the chain is on the cytoplasmic side. A helical transmembrane segment spans residues 315-335 (LTIALFHVAGKVFIHLPLLVF). Residues 336–337 (QP) are Extracellular-facing. A helical membrane pass occupies residues 338 to 358 (FWTFFALVLFWAYWIMTLLFL). Over 359–379 (GTTGSAVQNEQGFVEYKISGP) the chain is Cytoplasmic. A helical transmembrane segment spans residues 380–400 (LQYMWWYHVVGLIWISEFILA). Residues 401-441 (CQQMTVAGAVVTYYFTRDKRNLPFTPILASVNRLIRYHLGT) lie on the Extracellular side of the membrane. The helical transmembrane segment at 442–462 (VAKGSFIITLVKIPRMILMYI) threads the bilayer. Topologically, residues 463–536 (HSQLKGKENA…RVAAINTVGD (74 aa)) are cytoplasmic. The chain crosses the membrane as a helical span at residues 537 to 557 (FMLFLGKVLIVCSTGLAGIML). The Extracellular portion of the chain corresponds to 558-565 (LNYQQDYT). Residues 566–586 (VWVLPLIIVCLFAFLVAHCFL) form a helical membrane-spanning segment. Residues 587–656 (SIYEMVVDVL…KPMASGASSA (70 aa)) are Cytoplasmic-facing. Residues 635-656 (AGKGGAADARKLKPMASGASSA) form a disordered region. Residue Ser-651 is modified to Phosphoserine.

It belongs to the CTL (choline transporter-like) family. Expressed in neurons, oligodendrocytes and astrocytes. Also expressed in the mucosal cell layer of the colon. In the developing brain, isoform 1 is expressed in both neurons and oligodendroglial cells, whereas isoform 2 is restricted to oligodendroglial cells.

It is found in the cell membrane. The protein localises to the mitochondrion outer membrane. It carries out the reaction choline(out) + n H(+)(in) = choline(in) + n H(+)(out). The catalysed reaction is ethanolamine(out) + n H(+)(in) = ethanolamine(in) + n H(+)(out). Choline transporter, acts as a choline/H+ antiporter. Also acts as a high-affinity ethanolamine/H+ antiporter, regulating the supply of extracellular ethanolamine (Etn) for the CDP-Etn pathway, redistribute intracellular Etn and balance the CDP-Cho and CDP-Etn arms of the Kennedy pathway. Involved in membrane synthesis and myelin production. This Rattus norvegicus (Rat) protein is Choline transporter-like protein 1 (Slc44a1).